A 659-amino-acid chain; its full sequence is Threonine--tRNA ligase (659 aa).

Residues 1–60 (MTVYLPDGKPLELPEGATAKDVARALGEGWERRAVGAIVDGELYDLLKPLPQGAKVRLLT) form the TGS domain. Residues 252–552 (DHRRLGRELE…LIEHFAGDFP (301 aa)) form a catalytic region. Zn(2+) contacts are provided by Cys349, His400, and His529.

The protein belongs to the class-II aminoacyl-tRNA synthetase family. Homodimer. The cofactor is Zn(2+).

The protein resides in the cytoplasm. It catalyses the reaction tRNA(Thr) + L-threonine + ATP = L-threonyl-tRNA(Thr) + AMP + diphosphate + H(+). Its function is as follows. Catalyzes the attachment of threonine to tRNA(Thr) in a two-step reaction: L-threonine is first activated by ATP to form Thr-AMP and then transferred to the acceptor end of tRNA(Thr). Also edits incorrectly charged L-seryl-tRNA(Thr). This is Threonine--tRNA ligase from Thermus thermophilus (strain ATCC BAA-163 / DSM 7039 / HB27).